Consider the following 250-residue polypeptide: 2,3-bisphosphoglycerate-dependent phosphoglycerate mutase (250 aa).

Positions 10, 11, 17, 24, 62, 89, 92, 100, 116, 117, 184, 185, and 186 each coordinate (2R)-2,3-bisphosphoglycerate. His-11 acts as the Tele-phosphohistidine intermediate in catalysis. Gly-24 contacts (2R)-3-phosphoglycerate. Glu-89, Tyr-92, Lys-100, Arg-116, and Arg-117 together coordinate (2R)-3-phosphoglycerate. Glu-89 serves as the catalytic Proton donor/acceptor. Asn-186 contributes to the (2R)-3-phosphoglycerate binding site.

It belongs to the phosphoglycerate mutase family. BPG-dependent PGAM subfamily. Ubiquitously expressed with the highest expression in the sub-tegumental muscle layer (at protein level). Expressed in the tegument (at protein level).

The protein resides in the tegument. The catalysed reaction is (2R)-2-phosphoglycerate = (2R)-3-phosphoglycerate. It participates in carbohydrate degradation; glycolysis; pyruvate from D-glyceraldehyde 3-phosphate: step 3/5. Strongly activated by 2,3-bisphosphoglycerate (2,3-BPG). Inhibited by vanadate in a dose-dependent manner. Catalyzes interconversion of 3- and 2-phosphoglycerate with 2,3-bisphosphoglycerate (2,3-BPG) as the primer of the reaction. Schistosomula have significant surface phosphoglycerate mutase activity also without 2,3-BPG. Binds human plasminogen and enhances its conversion to active thrombolytic plasmin in the presence of human tissue plasminogen activator (tPA) in vitro. Host-interactive surface protein, which may degrade vascular blood clots surrounding the worm in vivo and thus may help survival of the parasite in its host microenvironment. This Schistosoma mansoni (Blood fluke) protein is 2,3-bisphosphoglycerate-dependent phosphoglycerate mutase.